A 426-amino-acid chain; its full sequence is MQISCLPISIPSITPRTSIPLLPSLSSNPRRIFNLTSLQSPNHCFFKRLHKSQTGFSNPVLAAMRREEDVEVDDSFYMRKCVELAKRAIGCTSPNPMVGCVIVKDGDIVGQGFHPKAGQPHAEVFALRDAGELAENATAYVSLEPCNHYGRTPPCTEALIKAKVRRVVIGMVDPNPIVFSSGISRLKDAGIDVTVSVEEELCKKMNEGFIHRMLTGKPFLALRYSMSVNGCLLDKIGQGASDSGGYYSKLLQEYDAIILSSSLSDELSSISSQEAINVSIQPIQIIVASNAQQSHILASSHTVEESGPKVVVFTAKESVAESGISSSGVETVVLEKINLDSILDYCYNRGLCSVLLDLRGNVKDLEVLLRDGFEQKLLQKVIIEVLPEWSTKDERQIASMKWLESKHVKDLQSKQLGGSVLLEGYF.

The N-terminal 61 residues, 1–61 (MQISCLPISI…SQTGFSNPVL (61 aa)), are a transit peptide targeting the chloroplast. Residues 72 to 194 (VDDSFYMRKC…RLKDAGIDVT (123 aa)) form the CMP/dCMP-type deaminase domain. Position 121 (His-121) interacts with Zn(2+). The Proton donor role is filled by Glu-123. Zn(2+) contacts are provided by Cys-146 and Cys-155.

Zn(2+) serves as cofactor.

It localises to the plastid. Its subcellular location is the chloroplast. The enzyme catalyses 2,5-diamino-6-hydroxy-4-(5-phosphoribosylamino)-pyrimidine + H2O + H(+) = 5-amino-6-(5-phospho-D-ribosylamino)uracil + NH4(+). It participates in cofactor biosynthesis; riboflavin biosynthesis; 5-amino-6-(D-ribitylamino)uracil from GTP: step 2/4. In terms of biological role, monofunctional pyrimidine deaminase involved in the riboflavin biosynthesis pathway. Also has a reductase domain that lacks catalytically essential substrate-binding residues. The chain is Riboflavin biosynthesis protein PYRD, chloroplastic (PYRD) from Arabidopsis thaliana (Mouse-ear cress).